A 331-amino-acid chain; its full sequence is Cytosolic Fe-S cluster assembly factor NBP35 (331 aa).

Over residues 1–10 (MSPSQTQIEK) the composition is skewed to polar residues. The segment at 1–32 (MSPSQTQIEKSQLAAPEPEHCPGPESELAGQG) is disordered. [4Fe-4S] cluster contacts are provided by C21, C35, C38, and C44. 75–82 (GKGGVGKS) is a binding site for ATP. [4Fe-4S] cluster-binding residues include C249 and C252.

It belongs to the Mrp/NBP35 ATP-binding proteins family. NUBP1/NBP35 subfamily. As to quaternary structure, heterotetramer of 2 NBP35 and 2 CFD1 chains. [4Fe-4S] cluster is required as a cofactor.

The protein localises to the cytoplasm. It localises to the nucleus. In terms of biological role, component of the cytosolic iron-sulfur (Fe/S) protein assembly (CIA) machinery. Required for maturation of extramitochondrial Fe-S proteins. The NBP35-CFD1 heterotetramer forms a Fe-S scaffold complex, mediating the de novo assembly of an Fe-S cluster and its transfer to target apoproteins. Required for biogenesis and export of both ribosomal subunits, which may reflect a role in assembly of the Fe/S clusters in RLI1, a protein which performs rRNA processing and ribosome export. This chain is Cytosolic Fe-S cluster assembly factor NBP35, found in Candida albicans (strain SC5314 / ATCC MYA-2876) (Yeast).